The primary structure comprises 469 residues: tRNA(Ile)-lysidine synthase (469 aa).

26-31 (SGGPDS) is an ATP binding site.

It belongs to the tRNA(Ile)-lysidine synthase family.

It is found in the cytoplasm. The enzyme catalyses cytidine(34) in tRNA(Ile2) + L-lysine + ATP = lysidine(34) in tRNA(Ile2) + AMP + diphosphate + H(+). Its function is as follows. Ligates lysine onto the cytidine present at position 34 of the AUA codon-specific tRNA(Ile) that contains the anticodon CAU, in an ATP-dependent manner. Cytidine is converted to lysidine, thus changing the amino acid specificity of the tRNA from methionine to isoleucine. The polypeptide is tRNA(Ile)-lysidine synthase (Clostridium perfringens (strain 13 / Type A)).